Here is a 511-residue protein sequence, read N- to C-terminus: Glycerol kinase (511 aa).

An ADP-binding site is contributed by Thr-11. ATP contacts are provided by Thr-11, Ser-12, and Ser-13. Residue Thr-11 coordinates sn-glycerol 3-phosphate. Arg-15 is an ADP binding site. Arg-81, Glu-82, Tyr-133, and Asp-242 together coordinate sn-glycerol 3-phosphate. 5 residues coordinate glycerol: Arg-81, Glu-82, Tyr-133, Asp-242, and Gln-243. Thr-264 and Gly-321 together coordinate ADP. ATP is bound by residues Thr-264, Gly-321, Gln-325, and Gly-426. ADP contacts are provided by Gly-426 and Asn-430.

The protein belongs to the FGGY kinase family.

It carries out the reaction glycerol + ATP = sn-glycerol 3-phosphate + ADP + H(+). The protein operates within polyol metabolism; glycerol degradation via glycerol kinase pathway; sn-glycerol 3-phosphate from glycerol: step 1/1. Its activity is regulated as follows. Inhibited by fructose 1,6-bisphosphate (FBP). Its function is as follows. Key enzyme in the regulation of glycerol uptake and metabolism. Catalyzes the phosphorylation of glycerol to yield sn-glycerol 3-phosphate. This chain is Glycerol kinase, found in Verminephrobacter eiseniae (strain EF01-2).